The sequence spans 194 residues: Ubiquitin-conjugating enzyme E2 T (194 aa).

Positions 2-152 constitute a UBC core domain; that stretch reads QRVSRLKREM…AKKWTAEHAI (151 aa). C86 (glycyl thioester intermediate) is an active-site residue. Composition is skewed to basic and acidic residues over residues 158-170 and 185-194; these read CVET…ENKN and NLEHTKKVCL. A disordered region spans residues 158 to 194; the sequence is CVETDGKTPENKNLKTSHKREALSAQENLEHTKKVCL.

This sequence belongs to the ubiquitin-conjugating enzyme family.

The protein resides in the nucleus. The enzyme catalyses S-ubiquitinyl-[E1 ubiquitin-activating enzyme]-L-cysteine + [E2 ubiquitin-conjugating enzyme]-L-cysteine = [E1 ubiquitin-activating enzyme]-L-cysteine + S-ubiquitinyl-[E2 ubiquitin-conjugating enzyme]-L-cysteine.. The protein operates within protein modification; protein ubiquitination. Its function is as follows. Accepts ubiquitin from the E1 complex and catalyzes its covalent attachment to other proteins. Catalyzes monoubiquitination. Involved in DNA repair. This is Ubiquitin-conjugating enzyme E2 T (ube2t) from Danio rerio (Zebrafish).